A 244-amino-acid polypeptide reads, in one-letter code: Proteasome subunit alpha (244 aa).

The protein belongs to the peptidase T1A family. As to quaternary structure, the 20S proteasome core is composed of 14 alpha and 14 beta subunits that assemble into four stacked heptameric rings, resulting in a barrel-shaped structure. The two inner rings, each composed of seven catalytic beta subunits, are sandwiched by two outer rings, each composed of seven alpha subunits. The catalytic chamber with the active sites is on the inside of the barrel. Has a gated structure, the ends of the cylinder being occluded by the N-termini of the alpha-subunits. Is capped by the proteasome-associated ATPase, ARC.

It localises to the cytoplasm. It functions in the pathway protein degradation; proteasomal Pup-dependent pathway. The formation of the proteasomal ATPase ARC-20S proteasome complex, likely via the docking of the C-termini of ARC into the intersubunit pockets in the alpha-rings, may trigger opening of the gate for substrate entry. Interconversion between the open-gate and close-gate conformations leads to a dynamic regulation of the 20S proteasome proteolysis activity. Functionally, component of the proteasome core, a large protease complex with broad specificity involved in protein degradation. This chain is Proteasome subunit alpha, found in Xylanimonas cellulosilytica (strain DSM 15894 / JCM 12276 / CECT 5975 / KCTC 9989 / LMG 20990 / NBRC 107835 / XIL07).